The sequence spans 937 residues: Protein translocase subunit SecA (937 aa).

Residues Q87, 105 to 109 (GEGKT), and D494 each bind ATP. Positions 881–937 (RGLNYIGPDEGGRASVHSDAEEYGGGTPAAAGTRRERREAARAEGKGKRGPKSRRKH) are disordered. 2 stretches are compositionally biased toward basic and acidic residues: residues 890 to 900 (EGGRASVHSDA) and 913 to 927 (TRRE…EGKG). Residues 928–937 (KRGPKSRRKH) are compositionally biased toward basic residues.

The protein belongs to the SecA family. In terms of assembly, monomer and homodimer. Part of the essential Sec protein translocation apparatus which comprises SecA, SecYEG and auxiliary proteins SecDF. Other proteins may also be involved.

Its subcellular location is the cell membrane. It is found in the cytoplasm. The catalysed reaction is ATP + H2O + cellular proteinSide 1 = ADP + phosphate + cellular proteinSide 2.. Part of the Sec protein translocase complex. Interacts with the SecYEG preprotein conducting channel. Has a central role in coupling the hydrolysis of ATP to the transfer of proteins into and across the cell membrane, serving as an ATP-driven molecular motor driving the stepwise translocation of polypeptide chains across the membrane. The sequence is that of Protein translocase subunit SecA from Nocardia farcinica (strain IFM 10152).